Reading from the N-terminus, the 428-residue chain is GTPase HflX (428 aa).

Positions Pro-214 to Thr-374 constitute a Hflx-type G domain. GTP contacts are provided by residues Gly-220 to Ser-227, Phe-245 to Asp-249, Asp-267 to Gly-270, Asn-333 to Asp-336, and Ser-352 to Lys-354. Residues Ser-227 and Thr-247 each coordinate Mg(2+).

The protein belongs to the TRAFAC class OBG-HflX-like GTPase superfamily. HflX GTPase family. Monomer. Associates with the 50S ribosomal subunit. It depends on Mg(2+) as a cofactor.

The protein resides in the cytoplasm. Its function is as follows. GTPase that associates with the 50S ribosomal subunit and may have a role during protein synthesis or ribosome biogenesis. This Caldanaerobacter subterraneus subsp. tengcongensis (strain DSM 15242 / JCM 11007 / NBRC 100824 / MB4) (Thermoanaerobacter tengcongensis) protein is GTPase HflX.